Reading from the N-terminus, the 306-residue chain is Ornithine carbamoyltransferase (306 aa).

Carbamoyl phosphate is bound by residues 51–54 (STRT), Gln-78, Arg-102, and 129–132 (HPCQ). L-ornithine is bound by residues Asn-160, Asp-223, and 227–228 (SM). Carbamoyl phosphate-binding positions include 263-264 (CL) and Arg-291.

The protein belongs to the aspartate/ornithine carbamoyltransferase superfamily. OTCase family.

Its subcellular location is the cytoplasm. The enzyme catalyses carbamoyl phosphate + L-ornithine = L-citrulline + phosphate + H(+). Its pathway is amino-acid biosynthesis; L-arginine biosynthesis; L-arginine from L-ornithine and carbamoyl phosphate: step 1/3. In terms of biological role, reversibly catalyzes the transfer of the carbamoyl group from carbamoyl phosphate (CP) to the N(epsilon) atom of ornithine (ORN) to produce L-citrulline. This Nostoc punctiforme (strain ATCC 29133 / PCC 73102) protein is Ornithine carbamoyltransferase (argF).